The sequence spans 435 residues: Mitochondrial association factor 1 form a1 (435 aa).

The first 20 residues, 1–20 (MWRIWRCRLSFLFATGCLLG), serve as a signal peptide directing secretion. At 21-96 (ALTAGLGSQM…VTARRRRNRR (76 aa)) the chain is on the vacuolar side. The chain crosses the membrane as a helical span at residues 97 to 117 (IALIATAVGVAVILAALYVLR). The Cytoplasmic segment spans residues 118–435 (RRRAQPPQEP…ERTYTFPQGD (318 aa)). A disordered region spans residues 120–159 (RAQPPQEPEPPTRLRTPRPRAPSGQQQPSESEPPAGVPMT).

In terms of assembly, interacts with host SAMM50.

It is found in the parasitophorous vacuole membrane. Its function is as follows. During host cell infection by tachyzoites, does not play a role in tethering the parasitophorous vacuole to the host mitochondria, probably because it does not bind host mitochondrial import protein TOMM70. The chain is Mitochondrial association factor 1 form a1 from Toxoplasma gondii (strain ATCC 50611 / Me49).